A 920-amino-acid chain; its full sequence is KIN14B-interacting protein At4g14310 (920 aa).

The segment covering 1–10 has biased composition (basic residues); the sequence is MSASTNRRRL. 2 disordered regions span residues 1-199 and 309-375; these read MSAS…EKST and IDGP…EKPS. The span at 35 to 54 shows a compositional bias: polar residues; sequence PISSKNSNPALQKSLSSKEN. Residues 90–105 are compositionally biased toward low complexity; the sequence is TRSTSSGLRGRSSSPS. Over residues 112 to 135 the composition is skewed to basic and acidic residues; that stretch reads SDLRKRNESRVIGEKGESGQDKKS. 2 stretches are compositionally biased toward polar residues: residues 137–147 and 166–184; these read LKSSGFKQGTS and CPVNSSKFEGSSVARNSIS. Residues 327–337 show a composition bias toward basic and acidic residues; sequence LNKEELEDRLL. The span at 345 to 355 shows a compositional bias: polar residues; it reads SRTQSKTSSHV. Residues 357–374 are compositionally biased toward basic and acidic residues; that stretch reads KGHDSVESNKAVNAEEKP. Positions 435–463 form a coiled coil; that stretch reads TEILRANEALEEIDDEENREEMELEEIDD.

Interacts with KIN14B, CDKA-1, CKS1 and CKS2.

It localises to the cytoplasm. Might be involved in division plane determination. This Arabidopsis thaliana (Mouse-ear cress) protein is KIN14B-interacting protein At4g14310.